Consider the following 663-residue polypeptide: Telomere length regulator taz1 (663 aa).

Residues 15-72 (ENEGDQQFDKEVVQNSDSNIETGQISDSLTKAVEERAETESSSNLSNFTTSESESSKP) are disordered. Composition is skewed to polar residues over residues 27 to 43 (VQNS…SDSL) and 54 to 67 (ESSS…TSES). Phosphoserine is present on Ser332. 2 disordered regions span residues 389-412 (GSTA…TFSE) and 471-554 (RAKS…PYEG). Basic and acidic residues-rich tracts occupy residues 489–498 (KRGDNLRREA) and 512–524 (PPVR…ESRS). Positions 556–612 (RTRRKWTDEEENELYEMISQHGCCWSKIIHIQKLENGPLKTFGPTQIKDKARLIKAR) constitute a Myb-like domain.

In terms of assembly, interacts with taf1 via the Myb domain, and ccq1.

It localises to the cytoplasm. It is found in the nucleus. Its subcellular location is the chromosome. The protein localises to the telomere. Functionally, regulates telomere length and function. Required for the repression of telomere-adjacent gene expression and for normal meiosis or sporulation. It may be a negative regulator of the telomere-replicating enzyme, telomerase, or may protect against activation of telomerase-independent pathways of telomere elongation. It may be involved in the interactions between chromosomes and spindle proteins, disruption of these interactions would lead to defective meiosis. In Schizosaccharomyces pombe (strain 972 / ATCC 24843) (Fission yeast), this protein is Telomere length regulator taz1 (taz1).